The sequence spans 391 residues: Probable dual-specificity RNA methyltransferase RlmN (391 aa).

The disordered stretch occupies residues 1–33; it reads MTTPLDTPTREPLPLAPAGPGKLVMSAPRRGKP. Over residues 12–21 the composition is skewed to low complexity; that stretch reads PLPLAPAGPG. The active-site Proton acceptor is the Glu-124. A Radical SAM core domain is found at 130-373; the sequence is YKNRDTICIS…TTVRDTRGSD (244 aa). Cys-137 and Cys-378 are disulfide-bonded. [4Fe-4S] cluster is bound by residues Cys-144, Cys-148, and Cys-151. S-adenosyl-L-methionine-binding positions include 199-200, Ser-233, 256-258, and Asn-335; these read GE and SLH. The S-methylcysteine intermediate role is filled by Cys-378.

Belongs to the radical SAM superfamily. RlmN family. [4Fe-4S] cluster serves as cofactor.

It localises to the cytoplasm. The catalysed reaction is adenosine(2503) in 23S rRNA + 2 reduced [2Fe-2S]-[ferredoxin] + 2 S-adenosyl-L-methionine = 2-methyladenosine(2503) in 23S rRNA + 5'-deoxyadenosine + L-methionine + 2 oxidized [2Fe-2S]-[ferredoxin] + S-adenosyl-L-homocysteine. It catalyses the reaction adenosine(37) in tRNA + 2 reduced [2Fe-2S]-[ferredoxin] + 2 S-adenosyl-L-methionine = 2-methyladenosine(37) in tRNA + 5'-deoxyadenosine + L-methionine + 2 oxidized [2Fe-2S]-[ferredoxin] + S-adenosyl-L-homocysteine. Functionally, specifically methylates position 2 of adenine 2503 in 23S rRNA and position 2 of adenine 37 in tRNAs. This Kineococcus radiotolerans (strain ATCC BAA-149 / DSM 14245 / SRS30216) protein is Probable dual-specificity RNA methyltransferase RlmN.